We begin with the raw amino-acid sequence, 136 residues long: Small ribosomal subunit protein bS6 (136 aa).

The segment at 96 to 136 is disordered; the sequence is VTEPSALARSGSDAEADRAPADEGSVEAAGAEPGSEAEAEA.

This sequence belongs to the bacterial ribosomal protein bS6 family.

In terms of biological role, binds together with bS18 to 16S ribosomal RNA. This chain is Small ribosomal subunit protein bS6, found in Methylococcus capsulatus (strain ATCC 33009 / NCIMB 11132 / Bath).